The primary structure comprises 273 residues: 2,3,4,5-tetrahydropyridine-2,6-dicarboxylate N-succinyltransferase (273 aa).

It belongs to the transferase hexapeptide repeat family.

It localises to the cytoplasm. The catalysed reaction is (S)-2,3,4,5-tetrahydrodipicolinate + succinyl-CoA + H2O = (S)-2-succinylamino-6-oxoheptanedioate + CoA. It participates in amino-acid biosynthesis; L-lysine biosynthesis via DAP pathway; LL-2,6-diaminopimelate from (S)-tetrahydrodipicolinate (succinylase route): step 1/3. This is 2,3,4,5-tetrahydropyridine-2,6-dicarboxylate N-succinyltransferase from Acinetobacter baumannii (strain SDF).